Reading from the N-terminus, the 142-residue chain is Large ribosomal subunit protein uL13 (142 aa).

The protein belongs to the universal ribosomal protein uL13 family. In terms of assembly, part of the 50S ribosomal subunit.

Its function is as follows. This protein is one of the early assembly proteins of the 50S ribosomal subunit, although it is not seen to bind rRNA by itself. It is important during the early stages of 50S assembly. This is Large ribosomal subunit protein uL13 from Edwardsiella ictaluri (strain 93-146).